Here is a 673-residue protein sequence, read N- to C-terminus: UvrABC system protein B (673 aa).

Residues 26–183 form the Helicase ATP-binding domain; the sequence is EGLEDGLAHQ…RRLAELQYAR (158 aa). 39–46 serves as a coordination point for ATP; sequence GVTGSGKT. Residues 92–115 carry the Beta-hairpin motif; it reads YYDYYQPEAYVPSSDTFIEKDASV. The Helicase C-terminal domain occupies 431 to 597; the sequence is QVDDLLSEIR…GLNKKVVDIL (167 aa). A disordered region spans residues 608–627; that stretch reads AKGRGKSRPIVEPDNVPMDM. Positions 633–668 constitute a UVR domain; that stretch reads QQKIHELEGLMMQHAQNLEFEEAAQIRDQLHQLRDL.

Belongs to the UvrB family. In terms of assembly, forms a heterotetramer with UvrA during the search for lesions. Interacts with UvrC in an incision complex.

It localises to the cytoplasm. The UvrABC repair system catalyzes the recognition and processing of DNA lesions. A damage recognition complex composed of 2 UvrA and 2 UvrB subunits scans DNA for abnormalities. Upon binding of the UvrA(2)B(2) complex to a putative damaged site, the DNA wraps around one UvrB monomer. DNA wrap is dependent on ATP binding by UvrB and probably causes local melting of the DNA helix, facilitating insertion of UvrB beta-hairpin between the DNA strands. Then UvrB probes one DNA strand for the presence of a lesion. If a lesion is found the UvrA subunits dissociate and the UvrB-DNA preincision complex is formed. This complex is subsequently bound by UvrC and the second UvrB is released. If no lesion is found, the DNA wraps around the other UvrB subunit that will check the other stand for damage. The protein is UvrABC system protein B of Escherichia coli O7:K1 (strain IAI39 / ExPEC).